The chain runs to 504 residues: Maturase K (504 aa).

Belongs to the intron maturase 2 family. MatK subfamily.

It is found in the plastid. It localises to the chloroplast. Its function is as follows. Usually encoded in the trnK tRNA gene intron. Probably assists in splicing its own and other chloroplast group II introns. In Vigna unguiculata (Cowpea), this protein is Maturase K.